Reading from the N-terminus, the 229-residue chain is Thiamine-phosphate synthase (229 aa).

Residues 38–42 and Asn-73 contribute to the 4-amino-2-methyl-5-(diphosphooxymethyl)pyrimidine site; that span reads QFREK. Residues Asp-74 and Asp-93 each coordinate Mg(2+). Ser-111 contributes to the 4-amino-2-methyl-5-(diphosphooxymethyl)pyrimidine binding site. 137-139 is a 2-[(2R,5Z)-2-carboxy-4-methylthiazol-5(2H)-ylidene]ethyl phosphate binding site; it reads TLS. Lys-140 contributes to the 4-amino-2-methyl-5-(diphosphooxymethyl)pyrimidine binding site. Residues Gly-169 and 189–190 contribute to the 2-[(2R,5Z)-2-carboxy-4-methylthiazol-5(2H)-ylidene]ethyl phosphate site; that span reads IS.

This sequence belongs to the thiamine-phosphate synthase family. Mg(2+) serves as cofactor.

It catalyses the reaction 2-[(2R,5Z)-2-carboxy-4-methylthiazol-5(2H)-ylidene]ethyl phosphate + 4-amino-2-methyl-5-(diphosphooxymethyl)pyrimidine + 2 H(+) = thiamine phosphate + CO2 + diphosphate. It carries out the reaction 2-(2-carboxy-4-methylthiazol-5-yl)ethyl phosphate + 4-amino-2-methyl-5-(diphosphooxymethyl)pyrimidine + 2 H(+) = thiamine phosphate + CO2 + diphosphate. The enzyme catalyses 4-methyl-5-(2-phosphooxyethyl)-thiazole + 4-amino-2-methyl-5-(diphosphooxymethyl)pyrimidine + H(+) = thiamine phosphate + diphosphate. Its pathway is cofactor biosynthesis; thiamine diphosphate biosynthesis; thiamine phosphate from 4-amino-2-methyl-5-diphosphomethylpyrimidine and 4-methyl-5-(2-phosphoethyl)-thiazole: step 1/1. Functionally, condenses 4-methyl-5-(beta-hydroxyethyl)thiazole monophosphate (THZ-P) and 2-methyl-4-amino-5-hydroxymethyl pyrimidine pyrophosphate (HMP-PP) to form thiamine monophosphate (TMP). The chain is Thiamine-phosphate synthase from Streptococcus suis (strain 98HAH33).